Consider the following 202-residue polypeptide: Prephenate decarboxylase (202 aa).

Belongs to the prephenate decarboxylase family.

It carries out the reaction prephenate + H(+) = 3-[(4R)-4-hydroxycyclohexa-1,5-dien-1-yl]-2-oxopropanoate + CO2. In vivo, involved in the biosynthesis of 2-carboxy-6-hydroxyoctahydroindole (Choi) present in the nonribosomal glycopeptides aeruginoside 126A and B. AerD is an unusual prephenate decarboxylase that avoids the typical aromatization of the cyclohexadienol ring of prephenate. AerD catalyzes the protonation at C8 followed by decarboxylation to produce the dihydro-4-hydroxyphenylpyruvate regioisomer A258 (H2HPP A258)(3-(4-hydroxycyclohexa- 1,5-dienyl)-2-oxopropanoic acid), which is able to undergo a nonenzymatic isomerization to produce dihydro-4-hydroxyphenylpyruvate regioisomer A295 (H2HPP A295)(3-(4-hydroxycyclohex-2-enylidene)-2-oxopropanoic acid). The protein is Prephenate decarboxylase of Planktothrix agardhii (strain NIVA-CYA 126/8).